A 433-amino-acid polypeptide reads, in one-letter code: Probable M18 family aminopeptidase 2 (433 aa).

Positions 79, 153, and 404 each coordinate Zn(2+).

This sequence belongs to the peptidase M18 family. Requires Zn(2+) as cofactor.

This chain is Probable M18 family aminopeptidase 2, found in Mycobacterium tuberculosis (strain ATCC 25177 / H37Ra).